A 156-amino-acid chain; its full sequence is Large ribosomal subunit protein uL22 (156 aa).

Belongs to the universal ribosomal protein uL22 family. As to quaternary structure, part of the 50S ribosomal subunit.

This protein binds specifically to 23S rRNA. It makes multiple contacts with different domains of the 23S rRNA in the assembled 50S subunit and ribosome. Its function is as follows. The globular domain of the protein is located near the polypeptide exit tunnel on the outside of the subunit, while an extended beta-hairpin is found that lines the wall of the exit tunnel in the center of the 70S ribosome. The protein is Large ribosomal subunit protein uL22 of Methanocaldococcus jannaschii (strain ATCC 43067 / DSM 2661 / JAL-1 / JCM 10045 / NBRC 100440) (Methanococcus jannaschii).